Consider the following 246-residue polypeptide: Pyridoxine 5'-phosphate synthase (246 aa).

Asn-7 is a 3-amino-2-oxopropyl phosphate binding site. 9 to 10 (DH) is a binding site for 1-deoxy-D-xylulose 5-phosphate. Arg-18 lines the 3-amino-2-oxopropyl phosphate pocket. The active-site Proton acceptor is the His-43. Residues Arg-45 and His-50 each contribute to the 1-deoxy-D-xylulose 5-phosphate site. Glu-70 functions as the Proton acceptor in the catalytic mechanism. Thr-100 serves as a coordination point for 1-deoxy-D-xylulose 5-phosphate. Residue His-190 is the Proton donor of the active site. Residues Gly-191 and 212 to 213 (GH) each bind 3-amino-2-oxopropyl phosphate.

Belongs to the PNP synthase family. In terms of assembly, homooctamer; tetramer of dimers.

It localises to the cytoplasm. The catalysed reaction is 3-amino-2-oxopropyl phosphate + 1-deoxy-D-xylulose 5-phosphate = pyridoxine 5'-phosphate + phosphate + 2 H2O + H(+). The protein operates within cofactor biosynthesis; pyridoxine 5'-phosphate biosynthesis; pyridoxine 5'-phosphate from D-erythrose 4-phosphate: step 5/5. In terms of biological role, catalyzes the complicated ring closure reaction between the two acyclic compounds 1-deoxy-D-xylulose-5-phosphate (DXP) and 3-amino-2-oxopropyl phosphate (1-amino-acetone-3-phosphate or AAP) to form pyridoxine 5'-phosphate (PNP) and inorganic phosphate. This chain is Pyridoxine 5'-phosphate synthase, found in Bordetella petrii (strain ATCC BAA-461 / DSM 12804 / CCUG 43448).